The chain runs to 318 residues: Transaldolase (318 aa).

The active-site Schiff-base intermediate with substrate is the lysine 132.

This sequence belongs to the transaldolase family. Type 1 subfamily. As to quaternary structure, homodimer.

Its subcellular location is the cytoplasm. The enzyme catalyses D-sedoheptulose 7-phosphate + D-glyceraldehyde 3-phosphate = D-erythrose 4-phosphate + beta-D-fructose 6-phosphate. The protein operates within carbohydrate degradation; pentose phosphate pathway; D-glyceraldehyde 3-phosphate and beta-D-fructose 6-phosphate from D-ribose 5-phosphate and D-xylulose 5-phosphate (non-oxidative stage): step 2/3. Transaldolase is important for the balance of metabolites in the pentose-phosphate pathway. The chain is Transaldolase from Shewanella baltica (strain OS155 / ATCC BAA-1091).